The chain runs to 266 residues: Hydroxyacylglutathione hydrolase (266 aa).

Residues H53, H55, D57, H58, H118, D140, and H178 each coordinate Zn(2+).

This sequence belongs to the metallo-beta-lactamase superfamily. Glyoxalase II family. Monomer. It depends on Zn(2+) as a cofactor.

It catalyses the reaction an S-(2-hydroxyacyl)glutathione + H2O = a 2-hydroxy carboxylate + glutathione + H(+). The protein operates within secondary metabolite metabolism; methylglyoxal degradation; (R)-lactate from methylglyoxal: step 2/2. Functionally, thiolesterase that catalyzes the hydrolysis of S-D-lactoyl-glutathione to form glutathione and D-lactic acid. The sequence is that of Hydroxyacylglutathione hydrolase from Cupriavidus metallidurans (strain ATCC 43123 / DSM 2839 / NBRC 102507 / CH34) (Ralstonia metallidurans).